The primary structure comprises 339 residues: Uroporphyrinogen decarboxylase (339 aa).

Substrate-binding positions include 21-25 (RQAGR), Phe40, Asp71, Tyr147, Ser202, and His315.

It belongs to the uroporphyrinogen decarboxylase family. Homodimer.

The protein resides in the cytoplasm. The catalysed reaction is uroporphyrinogen III + 4 H(+) = coproporphyrinogen III + 4 CO2. The protein operates within porphyrin-containing compound metabolism; protoporphyrin-IX biosynthesis; coproporphyrinogen-III from 5-aminolevulinate: step 4/4. Catalyzes the decarboxylation of four acetate groups of uroporphyrinogen-III to yield coproporphyrinogen-III. This chain is Uroporphyrinogen decarboxylase, found in Helicobacter pylori (strain J99 / ATCC 700824) (Campylobacter pylori J99).